Consider the following 319-residue polypeptide: Succinoglycan biosynthesis protein ExoW (319 aa).

The protein belongs to the glycosyltransferase 2 family.

It localises to the cell membrane. It functions in the pathway glycan metabolism; exopolysaccharide biosynthesis. Its function is as follows. Glycosyltransferase required for the synthesis of succinoglycan (EPS I). Needed for the addition of the seventh sugar (glucose), catalyzes the formation of a beta-1,3 linkage between the seventh and eighth sugar. This is Succinoglycan biosynthesis protein ExoW (exoW) from Rhizobium meliloti (strain 1021) (Ensifer meliloti).